An 85-amino-acid chain; its full sequence is Large ribosomal subunit protein bL27 (85 aa).

It belongs to the bacterial ribosomal protein bL27 family.

The protein is Large ribosomal subunit protein bL27 of Campylobacter fetus subsp. fetus (strain 82-40).